We begin with the raw amino-acid sequence, 142 residues long: Hemoglobin subunit alpha-A (142 aa).

Positions Val-2 to Arg-142 constitute a Globin domain. His-59 provides a ligand contact to O2. Residue His-88 participates in heme b binding.

Belongs to the globin family. In terms of assembly, heterotetramer of two alpha chains and two beta chains. In terms of tissue distribution, red blood cells.

In terms of biological role, involved in oxygen transport from the lung to the various peripheral tissues. The chain is Hemoglobin subunit alpha-A (HBAA) from Meleagris gallopavo (Wild turkey).